Consider the following 114-residue polypeptide: MSFKTRAVAESTYYIKSGAYYLAVTPERQIITQNTVYAWEVSIEGEYNYLKDPGTTHYLTDNGGQNLLNPRSDVDGKWGGGSEDQATQLINAETEKPLSVPYGQPFQTWLFVKV.

Residues 1 to 6 constitute a propeptide that is removed on maturation; the sequence is MSFKTR.

The protein localises to the secreted. The protein resides in the cell wall. Functionally, may play a role in the structure of the hypha-forming fruit bodies. The sequence is that of 11.9 kDa wall protein (TDF-1) from Tuber dryophilum (Truffle).